The chain runs to 456 residues: Solute carrier family 49 member 4 homolog (456 aa).

Residues 1–29 (MGLEWSSPGERQPLLFPGGPRSPRVFGRR) are Cytoplasmic-facing. Positions 14–15 (LL) match the Di-leucine motif; mediates lysosomal localization motif. The helical transmembrane segment at 30–50 (WLVLLLFSVLAFLQGLVWNSW) threads the bilayer. Topologically, residues 51-67 (GPIQISARTAYKFSGLD) are lumenal. The chain crosses the membrane as a helical span at residues 68–88 (IALLVLWGPIGFLPCFLFMWL). Over 89 to 95 (MDNRGLR) the chain is Cytoplasmic. A helical membrane pass occupies residues 96-116 (ITVLLTALLMVLGAGLRCVPV). Topologically, residues 117 to 123 (EDLAIRR) are lumenal. Residues 124–144 (ILIHGGQLLNGFAGPTVMNAA) form a helical membrane-spanning segment. Residues 145-162 (PFLSTTWFAPDERATATA) lie on the Cytoplasmic side of the membrane. A helical membrane pass occupies residues 163-183 (IASMLNYLGGACAFLVGPLVV). Residues 184 to 207 (PAPNSTSGLLLYSGSTDAIKDRIE) are Lumenal-facing. Residue Asn187 is glycosylated (N-linked (GlcNAc...) asparagine). The chain crosses the membrane as a helical span at residues 208–228 (AVMYAEFGIIFVVFAAILAYF). Over 229–259 (PARPPVPPSVAAASRRLSYRTSIFRLLSNLR) the chain is Cytoplasmic. A helical membrane pass occupies residues 260 to 280 (FLLIVLAYAIPLGFYSGWIGV). Residues 281-292 (LDLILTPVHVTQ) lie on the Lumenal side of the membrane. The helical transmembrane segment at 293-313 (VDAGWVGFWSIVGGCVVGIAV) threads the bilayer. The Cytoplasmic portion of the chain corresponds to 314 to 326 (GRFADSIRGVLKP). The helical transmembrane segment at 327–347 (ILLLLFSGATLSATWFTLTFL) threads the bilayer. Topologically, residues 348–362 (SNVTHLPLTTATLYT) are lumenal. An N-linked (GlcNAc...) asparagine glycan is attached at Asn349. A helical transmembrane segment spans residues 363-383 (SCILIGVFLNGTVPIFFELFV). Residues 384–392 (ETVYPIPEG) are Cytoplasmic-facing. Residues 393–413 (IACGVVTFLSNIFMGVLLVFL) traverse the membrane as a helical segment. Residues 414–420 (TMYQMEL) lie on the Lumenal side of the membrane. The chain crosses the membrane as a helical span at residues 421–441 (SWLNWCLTGSCFLSLFFIACF). At 442–456 (RESYDRLYLDVFVSV) the chain is on the cytoplasmic side.

This sequence belongs to the major facilitator superfamily.

Its subcellular location is the lysosome membrane. It carries out the reaction pyridoxine(out) + n H(+)(out) = pyridoxine(in) + n H(+)(in). In terms of biological role, mediates H(+)-dependent pyridoxine transport. The chain is Solute carrier family 49 member 4 homolog (slc49a4) from Xenopus laevis (African clawed frog).